Consider the following 224-residue polypeptide: UPF0758 protein VP0184 (224 aa).

An MPN domain is found at Ala-102 to Ile-224. Positions 173, 175, and 186 each coordinate Zn(2+). Positions His-173–Asp-186 match the JAMM motif motif.

This sequence belongs to the UPF0758 family.

The protein is UPF0758 protein VP0184 of Vibrio parahaemolyticus serotype O3:K6 (strain RIMD 2210633).